Reading from the N-terminus, the 241-residue chain is Superantigen-like protein 13 (241 aa).

A signal peptide spans 1 to 26 (MNNNITKKIILSTTLLLLGTASTQFP).

It belongs to the staphylococcal/streptococcal toxin family. Interacts with host FPR2; this interaction promotes neutrophil chemotaxis.

Its function is as follows. Acts as a pathogen alarming molecule by acting on host neutrophil chemotactic factors FPR2. Plays a role of chemoattractant and induces degranulation and oxidative burst in neutrophils. In Staphylococcus aureus (strain Newman), this protein is Superantigen-like protein 13.